Here is a 383-residue protein sequence, read N- to C-terminus: N-acetyldiaminopimelate deacetylase (383 aa).

Asp-72 is an active-site residue. Glu-131 acts as the Proton acceptor in catalysis.

The protein belongs to the peptidase M20A family. N-acetyldiaminopimelate deacetylase subfamily.

It catalyses the reaction N-acetyl-(2S,6S)-2,6-diaminopimelate + H2O = (2S,6S)-2,6-diaminopimelate + acetate. It functions in the pathway amino-acid biosynthesis; L-lysine biosynthesis via DAP pathway; LL-2,6-diaminopimelate from (S)-tetrahydrodipicolinate (acetylase route): step 3/3. Its function is as follows. Catalyzes the conversion of N-acetyl-diaminopimelate to diaminopimelate and acetate. The protein is N-acetyldiaminopimelate deacetylase of Lacticaseibacillus paracasei (strain ATCC 334 / BCRC 17002 / CCUG 31169 / CIP 107868 / KCTC 3260 / NRRL B-441) (Lactobacillus paracasei).